The sequence spans 295 residues: G1/S-specific cyclin-D1 (295 aa).

Positions 28-152 constitute a Cyclin N-terminal domain; it reads LRAMLKAEET…LLVNKLKWNL (125 aa). A disordered region spans residues 262-295; it reads AQQNMDPKAAEEEEEEEEEVDLACTPTDVRDVDI. Lys269 participates in a covalent cross-link: Glycyl lysine isopeptide (Lys-Gly) (interchain with G-Cter in ubiquitin). Residues 272 to 282 are compositionally biased toward acidic residues; it reads EEEEEEEEEVD. Thr286 carries the phosphothreonine modification.

Belongs to the cyclin family. Cyclin D subfamily. In terms of assembly, interacts with either CDK4 or CDK6 protein kinase to form a serine/threonine kinase holoenzyme complex. The cyclin subunit imparts substrate specificity to the complex. Component of the ternary complex CCND1/CDK4/CDKN1B required for nuclear translocation and modulation of CDK4-mediated kinase activity. Interacts directly with CDKN1B. Can form similar complexes with either CDKN1A or CDKN2A. Interacts with UHRF2; the interaction ubiquitinates CCND1 and appears to occur independently of phosphorylation. Interacts with USP2. Interacts (via cyclin N-terminal domain) with INSM1 (via N-terminal region); the interaction competes with the binding of CCND1 to CDK4 during cell cycle progression and inhibits CDK4 activity. Interacts with CDK4; the interaction is prevented with the binding of CCND1 to INSM1 during cell cycle progression. In terms of processing, phosphorylation at Thr-286 by MAP kinases is required for ubiquitination and degradation by the DCX(AMBRA1) complex. It also plays an essential role for recognition by the FBXO31 component of SCF (SKP1-cullin-F-box) protein ligase complex following DNA damage. Ubiquitinated at Lys-269 by the DCX(AMBRA1) complex during the transition from G1 to S cell phase, leading to its degradation: ubiquitination is dependent on Thr-286 phosphorylation. The DCX(AMBRA1) complex represents the major regulator of CCND1 stability during the G1/S transition. Also ubiquitinated by the SCF(FBXO4) and Cul7-RING(FBXW8) ubiquitin-protein ligase complexes. Following DNA damage it is ubiquitinated by the SCF(FBXO31) protein ligase complex. SCF(FBXO31) ubiquitination is dependent on Thr-286 phosphorylation. Ubiquitinated also by UHRF2 apparently in a phosphorylation-independent manner. Ubiquitination leads to its degradation and G1 arrest. Deubiquitinated by USP2; leading to its stabilization.

It localises to the nucleus. Its subcellular location is the cytoplasm. The protein resides in the nucleus membrane. Regulatory component of the cyclin D1-CDK4 (DC) complex that phosphorylates and inhibits members of the retinoblastoma (RB) protein family including RB1 and regulates the cell-cycle during G(1)/S transition. Phosphorylation of RB1 allows dissociation of the transcription factor E2F from the RB/E2F complex and the subsequent transcription of E2F target genes which are responsible for the progression through the G(1) phase. Hypophosphorylates RB1 in early G(1) phase. Cyclin D-CDK4 complexes are major integrators of various mitogenenic and antimitogenic signals. Also a substrate for SMAD3, phosphorylating SMAD3 in a cell-cycle-dependent manner and repressing its transcriptional activity. Component of the ternary complex, cyclin D1/CDK4/CDKN1B, required for nuclear translocation and activity of the cyclin D-CDK4 complex. Exhibits transcriptional corepressor activity with INSM1 on the NEUROD1 and INS promoters in a cell cycle-independent manner. This chain is G1/S-specific cyclin-D1, found in Homo sapiens (Human).